Reading from the N-terminus, the 1032-residue chain is Importin beta-like protein KAP120 (1032 aa).

At Ala-2 the chain carries N-acetylalanine. The region spanning 31–103 (AEQQLRQWET…RGRLFEMIDE (73 aa)) is the Importin N-terminal domain.

This sequence belongs to the importin beta family. In terms of assembly, interacts with GTP-bound GSP1 and RFP1. Associates with the nuclear pore complex.

Its subcellular location is the cytoplasm. It localises to the nucleus. Functions in nuclear protein import as nuclear transport receptor. Serves as receptor for nuclear localization signals (NLS) in cargo substrates. Thought to mediate docking of the importin/substrate complex to the nuclear pore complex (NPC) through binding to nucleoporin and the complex is subsequently translocated through the pore by an energy requiring, RAN-dependent mechanism. Required for nuclear import of Ho endonuclease and RFP1, and involved in rRNA-processing and assembly or export of 60S ribosomal subunits. This chain is Importin beta-like protein KAP120 (KAP120), found in Saccharomyces cerevisiae (strain ATCC 204508 / S288c) (Baker's yeast).